We begin with the raw amino-acid sequence, 294 residues long: Ribosomal protein L11 methyltransferase (294 aa).

S-adenosyl-L-methionine is bound by residues threonine 145, glycine 166, aspartate 188, and asparagine 227.

The protein belongs to the methyltransferase superfamily. PrmA family.

Its subcellular location is the cytoplasm. It catalyses the reaction L-lysyl-[protein] + 3 S-adenosyl-L-methionine = N(6),N(6),N(6)-trimethyl-L-lysyl-[protein] + 3 S-adenosyl-L-homocysteine + 3 H(+). In terms of biological role, methylates ribosomal protein L11. The sequence is that of Ribosomal protein L11 methyltransferase from Hydrogenovibrio crunogenus (strain DSM 25203 / XCL-2) (Thiomicrospira crunogena).